The primary structure comprises 149 residues: Lipoprotein MlpF (149 aa).

The N-terminal stretch at 1–17 is a signal peptide; it reads MKIINILFCLFLLLLNS. Residue C18 is the site of N-palmitoyl cysteine attachment. A lipid anchor (S-diacylglycerol cysteine) is attached at C18. Residues 26–58 are disordered; sequence LKNNAQQTKSRGKRDLTQKEATPEKPKSKEELL. A compositionally biased stretch (basic and acidic residues) spans 38-58; the sequence is KRDLTQKEATPEKPKSKEELL.

Belongs to the Multicopy lipoprotein (Mlp) family.

Its subcellular location is the cell outer membrane. Functionally, an outer membrane protein that may participate in pathogenesis. Some human Lyme disease patients have antibodies against this protein. The Mlp proteins probably undergo intragenic recombination, generating new alleles. This is Lipoprotein MlpF from Borreliella burgdorferi (strain ATCC 35210 / DSM 4680 / CIP 102532 / B31) (Borrelia burgdorferi).